Here is a 155-residue protein sequence, read N- to C-terminus: Small ribosomal subunit protein uS7cz/uS7cy (155 aa).

The protein belongs to the universal ribosomal protein uS7 family. Part of the 30S ribosomal subunit.

The protein localises to the plastid. The protein resides in the chloroplast. One of the primary rRNA binding proteins, it binds directly to 16S rRNA where it nucleates assembly of the head domain of the 30S subunit. The chain is Small ribosomal subunit protein uS7cz/uS7cy (rps7-A) from Angiopteris evecta (Mule's foot fern).